The primary structure comprises 396 residues: NADH-quinone oxidoreductase subunit D (396 aa).

The protein belongs to the complex I 49 kDa subunit family. As to quaternary structure, NDH-1 is composed of 14 different subunits. Subunits NuoB, C, D, E, F, and G constitute the peripheral sector of the complex.

Its subcellular location is the cell inner membrane. It carries out the reaction a quinone + NADH + 5 H(+)(in) = a quinol + NAD(+) + 4 H(+)(out). In terms of biological role, NDH-1 shuttles electrons from NADH, via FMN and iron-sulfur (Fe-S) centers, to quinones in the respiratory chain. The immediate electron acceptor for the enzyme in this species is believed to be ubiquinone. Couples the redox reaction to proton translocation (for every two electrons transferred, four hydrogen ions are translocated across the cytoplasmic membrane), and thus conserves the redox energy in a proton gradient. The chain is NADH-quinone oxidoreductase subunit D from Methylobacterium radiotolerans (strain ATCC 27329 / DSM 1819 / JCM 2831 / NBRC 15690 / NCIMB 10815 / 0-1).